A 430-amino-acid chain; its full sequence is Mitochondrial distribution and morphology protein 12 (430 aa).

Residues 1-430 (MSIDIDWERA…VYPSFWTFLI (430 aa)) form the SMP-LTD domain. 3 disordered regions span residues 61–117 (DLSD…YESN), 177–276 (TPLG…RMRE), and 352–377 (MGPE…KPSS). A compositionally biased stretch (acidic residues) spans 69–82 (FYEDDDENFSDSSE). A compositionally biased stretch (basic and acidic residues) spans 85 to 96 (SPTREPVDRYGN). Composition is skewed to polar residues over residues 211–233 (SAQS…SMSI) and 241–251 (ASQGMPNNQGQ). The span at 265 to 276 (PLDDTPPRRMRE) shows a compositional bias: basic and acidic residues.

It belongs to the MDM12 family. Component of the ER-mitochondria encounter structure (ERMES) or MDM complex, composed of MMM1, MDM10, MDM12 and MDM34. An MMM1 homodimer associates with one molecule of MDM12 on each side in a pairwise head-to-tail manner, and the SMP-LTD domains of MMM1 and MDM12 generate a continuous hydrophobic tunnel for phospholipid trafficking.

It localises to the mitochondrion outer membrane. The protein localises to the endoplasmic reticulum membrane. In terms of biological role, component of the ERMES/MDM complex, which serves as a molecular tether to connect the endoplasmic reticulum (ER) and mitochondria. Components of this complex are involved in the control of mitochondrial shape and protein biogenesis, and function in nonvesicular lipid trafficking between the ER and mitochondria. MDM12 is required for the interaction of the ER-resident membrane protein MMM1 and the outer mitochondrial membrane-resident beta-barrel protein MDM10. The MDM12-MMM1 subcomplex functions in the major beta-barrel assembly pathway that is responsible for biogenesis of all mitochondrial outer membrane beta-barrel proteins, and acts in a late step after the SAM complex. The MDM10-MDM12-MMM1 subcomplex further acts in the TOM40-specific pathway after the action of the MDM12-MMM1 complex. Essential for establishing and maintaining the structure of mitochondria and maintenance of mtDNA nucleoids. This Ajellomyces capsulatus (strain G186AR / H82 / ATCC MYA-2454 / RMSCC 2432) (Darling's disease fungus) protein is Mitochondrial distribution and morphology protein 12.